The chain runs to 493 residues: Guanosine-5'-triphosphate,3'-diphosphate pyrophosphatase (493 aa).

Belongs to the GppA/Ppx family. GppA subfamily.

It catalyses the reaction guanosine 3'-diphosphate 5'-triphosphate + H2O = guanosine 3',5'-bis(diphosphate) + phosphate + H(+). It participates in purine metabolism; ppGpp biosynthesis; ppGpp from GTP: step 2/2. Catalyzes the conversion of pppGpp to ppGpp. Guanosine pentaphosphate (pppGpp) is a cytoplasmic signaling molecule which together with ppGpp controls the 'stringent response', an adaptive process that allows bacteria to respond to amino acid starvation, resulting in the coordinated regulation of numerous cellular activities. This chain is Guanosine-5'-triphosphate,3'-diphosphate pyrophosphatase, found in Salmonella choleraesuis (strain SC-B67).